The primary structure comprises 241 residues: Major prion protein (241 aa).

A signal peptide spans 1–15; that stretch reads MLVLFVATWSDLGLC. The segment at 16-31 is interaction with ADGRG6; the sequence is KKRPKPGGWNTGGSRY. The interaction with GRB2, ERI3 and SYN1 stretch occupies residues 16–223; that stretch reads KKRPKPGGWN…ESQAYYQRGS (208 aa). A disordered region spans residues 18–100; the sequence is RPKPGGWNTG…QWNKPSKPKT (83 aa). 5 consecutive repeat copies span residues 44-52, 53-60, 61-68, 69-76, and 77-84. Residues 44 to 84 form a 5 X 8 AA tandem repeats of P-H-G-G-G-W-G-Q region; the sequence is PQGGGSWGQPHGGGWGQPHGGGWGQPHGGGWGQPHGGGWGQ. Residues 45 to 88 are compositionally biased toward gly residues; sequence QGGGSWGQPHGGGWGQPHGGGWGQPHGGGWGQPHGGGWGQGGGT. Cu(2+) is bound by residues H54, G55, G56, H62, G63, G64, H70, G71, G72, H78, G79, and G80. Residues C172 and C207 are joined by a disulfide bond. N-linked (GlcNAc...) asparagine glycans are attached at residues N174 and N190. S223 is lipidated: GPI-anchor amidated serine. Positions 224–241 are cleaved as a propeptide — removed in mature form; the sequence is SMVLFSSPPVILLISFLI.

It belongs to the prion family. As to quaternary structure, monomer and homodimer. Has a tendency to aggregate into amyloid fibrils containing a cross-beta spine, formed by a steric zipper of superposed beta-strands. Soluble oligomers may represent an intermediate stage on the path to fibril formation. Copper binding may promote oligomerization. Interacts with GRB2, APP, ERI3/PRNPIP and SYN1. Mislocalized cytosolically exposed PrP interacts with MGRN1; this interaction alters MGRN1 subcellular location and causes lysosomal enlargement. Interacts with APP. Interacts with KIAA1191. Interacts with ADGRG6.

The protein resides in the cell membrane. The protein localises to the golgi apparatus. Functionally, its primary physiological function is unclear. May play a role in neuronal development and synaptic plasticity. May be required for neuronal myelin sheath maintenance. May promote myelin homeostasis through acting as an agonist for ADGRG6 receptor. May play a role in iron uptake and iron homeostasis. Soluble oligomers are toxic to cultured neuroblastoma cells and induce apoptosis (in vitro). Association with GPC1 (via its heparan sulfate chains) targets PRNP to lipid rafts. Also provides Cu(2+) or Zn(2+) for the ascorbate-mediated GPC1 deaminase degradation of its heparan sulfate side chains. This Plecturocebus moloch (Dusky titi monkey) protein is Major prion protein (PRNP).